Here is a 692-residue protein sequence, read N- to C-terminus: UvrABC system protein B (692 aa).

The Helicase ATP-binding domain maps to D32–I418. Residue G45–T52 coordinates ATP. A Beta-hairpin motif is present at residues Y98–V121. The Helicase C-terminal domain occupies Q436–I631. Positions K656 to M691 constitute a UVR domain.

It belongs to the UvrB family. In terms of assembly, forms a heterotetramer with UvrA during the search for lesions. Interacts with UvrC in an incision complex.

The protein resides in the cytoplasm. Its function is as follows. The UvrABC repair system catalyzes the recognition and processing of DNA lesions. A damage recognition complex composed of 2 UvrA and 2 UvrB subunits scans DNA for abnormalities. Upon binding of the UvrA(2)B(2) complex to a putative damaged site, the DNA wraps around one UvrB monomer. DNA wrap is dependent on ATP binding by UvrB and probably causes local melting of the DNA helix, facilitating insertion of UvrB beta-hairpin between the DNA strands. Then UvrB probes one DNA strand for the presence of a lesion. If a lesion is found the UvrA subunits dissociate and the UvrB-DNA preincision complex is formed. This complex is subsequently bound by UvrC and the second UvrB is released. If no lesion is found, the DNA wraps around the other UvrB subunit that will check the other stand for damage. This Lactococcus lactis subsp. lactis (strain IL1403) (Streptococcus lactis) protein is UvrABC system protein B.